The chain runs to 144 residues: MLLPKRVKYRRQHRPKTTGRSKGGNYVTFGEYGLQATTTSWITSRQIESARIAMTRYMKRGGKVWIKIFPHTPYTKKPLEVRMGAGKGAVEGWIAVVKPGRILFEVAGVPEEVAREALRLASHKLPVKSKFVKREELGGETNES.

Residues 1–19 are compositionally biased toward basic residues; sequence MLLPKRVKYRRQHRPKTTG. The disordered stretch occupies residues 1 to 23; the sequence is MLLPKRVKYRRQHRPKTTGRSKG.

Belongs to the universal ribosomal protein uL16 family. Part of the 50S ribosomal subunit.

Binds 23S rRNA and is also seen to make contacts with the A and possibly P site tRNAs. The sequence is that of Large ribosomal subunit protein uL16 from Staphylococcus epidermidis (strain ATCC 35984 / DSM 28319 / BCRC 17069 / CCUG 31568 / BM 3577 / RP62A).